We begin with the raw amino-acid sequence, 156 residues long: Small ribosomal subunit protein uS7 (156 aa).

The protein belongs to the universal ribosomal protein uS7 family. Part of the 30S ribosomal subunit. Contacts proteins S9 and S11.

In terms of biological role, one of the primary rRNA binding proteins, it binds directly to 16S rRNA where it nucleates assembly of the head domain of the 30S subunit. Is located at the subunit interface close to the decoding center, probably blocks exit of the E-site tRNA. This chain is Small ribosomal subunit protein uS7, found in Psychromonas ingrahamii (strain DSM 17664 / CCUG 51855 / 37).